Here is a 242-residue protein sequence, read N- to C-terminus: Zinc-finger homeodomain protein 13 (242 aa).

A ZF-HD dimerization-type; degenerate zinc finger spans residues 64-111 (YYECRKNHAADIGTTAYDGCGEFVSSTGEEDSLNCAACGCHRNFHREE). Positions 144–166 (GGKSEGKKKKKEKESYGGDPIIK) are disordered. The span at 155-166 (EKESYGGDPIIK) shows a compositional bias: basic and acidic residues. Residues 179 to 238 (VKRLKTKFTAEQTEKMRDYAEKLRWKVRPERQEEVEEFCVEIGVNRKNFRIWMNNHKDKI) constitute a DNA-binding region (homeobox).

In terms of assembly, homo- and heterodimer with other ZFHD proteins. Interacts with MIF1, MIF2 and MIF3; these interactions prevent nuclear localization and DNA-binding to inhibit transcription regulation activity. Binds to ZHD11. As to expression, mostly expressed in flowers.

The protein resides in the nucleus. Functionally, putative transcription factor. This Arabidopsis thaliana (Mouse-ear cress) protein is Zinc-finger homeodomain protein 13 (ZHD13).